The chain runs to 333 residues: Sphingomyelinase C (333 aa).

The N-terminal stretch at 1–27 (MKGKLLKGVLSFGIGLGVLYGGSSVQA) is a signal peptide. C150 and C186 are joined by a disulfide.

The protein belongs to the neutral sphingomyelinase family. Requires Mg(2+) as cofactor.

The protein localises to the secreted. It carries out the reaction a sphingomyelin + H2O = phosphocholine + an N-acylsphing-4-enine + H(+). With respect to regulation, activated by cobalt and manganese ions. In terms of biological role, required, with sphingomyelinase, to effect target cell lysis (hemolysis). The chain is Sphingomyelinase C (sph) from Bacillus cereus.